Here is a 386-residue protein sequence, read N- to C-terminus: Galactokinase (386 aa).

Residue 32-35 (EHTD) participates in substrate binding. ATP-binding positions include S66 and 123-129 (GASLSSS). Residues S129 and E161 each contribute to the Mg(2+) site. Residue D173 is the Proton acceptor of the active site. Y223 contributes to the substrate binding site.

It belongs to the GHMP kinase family. GalK subfamily.

The protein resides in the cytoplasm. The enzyme catalyses alpha-D-galactose + ATP = alpha-D-galactose 1-phosphate + ADP + H(+). It participates in carbohydrate metabolism; galactose metabolism. Functionally, catalyzes the transfer of the gamma-phosphate of ATP to D-galactose to form alpha-D-galactose-1-phosphate (Gal-1-P). This is Galactokinase from Staphylococcus saprophyticus subsp. saprophyticus (strain ATCC 15305 / DSM 20229 / NCIMB 8711 / NCTC 7292 / S-41).